Consider the following 37-residue polypeptide: Bactericidin B-3 (37 aa).

G37 carries the glycine amide modification.

Belongs to the cecropin family.

The protein localises to the secreted. Cecropins have lytic and antibacterial activity against several Gram-positive and Gram-negative bacteria. The chain is Bactericidin B-3 from Manduca sexta (Tobacco hawkmoth).